The following is a 101-amino-acid chain: Small ribosomal subunit protein uS14 (101 aa).

Residues 1 to 11 (MAKKSSVEKNN) are compositionally biased toward basic and acidic residues. The tract at residues 1–22 (MAKKSSVEKNNRRQRMVKNAAA) is disordered. Residues 12 to 22 (RRQRMVKNAAA) are compositionally biased toward basic residues.

This sequence belongs to the universal ribosomal protein uS14 family. Part of the 30S ribosomal subunit. Contacts proteins S3 and S10.

In terms of biological role, binds 16S rRNA, required for the assembly of 30S particles and may also be responsible for determining the conformation of the 16S rRNA at the A site. The polypeptide is Small ribosomal subunit protein uS14 (Afipia carboxidovorans (strain ATCC 49405 / DSM 1227 / KCTC 32145 / OM5) (Oligotropha carboxidovorans)).